The chain runs to 153 residues: MTKIKADPDGPEAQADACCGERTYHELLVNLNPIAQPLASRRLTRKLYKCIKKAVKQKQIRRGVKEVQKFINKGEKGIMVLAGDTLPIEVYCHLPVMCEDRNLPYVYIPSKTDLGAAAGSKRPTCVIMVKPHEEYQEAYDECLEEVQALPPPM.

Lys3 participates in a covalent cross-link: Glycyl lysine isopeptide (Lys-Gly) (interchain with G-Cter in SUMO2). Residue Lys5 forms a Glycyl lysine isopeptide (Lys-Gly) (interchain with G-Cter in SUMO); alternate linkage. Lys5 participates in a covalent cross-link: Glycyl lysine isopeptide (Lys-Gly) (interchain with G-Cter in SUMO1); alternate. Lys5 is covalently cross-linked (Glycyl lysine isopeptide (Lys-Gly) (interchain with G-Cter in SUMO2); alternate).

This sequence belongs to the eukaryotic ribosomal protein eL8 family. As to quaternary structure, part of the H/ACA small nucleolar ribonucleoprotein (H/ACA snoRNP) complex, which contains NHP2/NOLA2, GAR1/NOLA1, NOP10/NOLA3, and DKC1/NOLA4, which is presumed to be the catalytic subunit. The complex contains a stable core formed by binding of one or two NOP10-DKC1 heterodimers to NHP2; GAR1 subsequently binds to this core via DKC1. The complex binds a box H/ACA small nucleolar RNA (snoRNA), which may target the specific site of modification within the RNA substrate. During assembly, the complex contains NAF1 instead of GAR1/NOLA1. The complex also interacts with TERC, which contains a 3'-terminal domain related to the box H/ACA snoRNAs. Specific interactions with snoRNAs or TERC are mediated by GAR1 and NHP2. Associates with NOLC1/NOPP140. H/ACA snoRNPs interact with the SMN complex, consisting of SMN1 or SMN2, GEMIN2/SIP1, DDX20/GEMIN3, and GEMIN4. This is mediated by interaction between GAR1 and SMN1 or SMN2. The SMN complex may be required for correct assembly of the H/ACA snoRNP complex. Component of the telomerase holoenzyme complex composed of one molecule of TERT, one molecule of WRAP53/TCAB1, two molecules of H/ACA ribonucleoprotein complex subunits DKC1, NOP10, NHP2 and GAR1, and a telomerase RNA template component (TERC). The telomerase holoenzyme complex is associated with TEP1, SMG6/EST1A and POT1.

It is found in the nucleus. The protein localises to the nucleolus. It localises to the cajal body. Functionally, required for ribosome biogenesis and telomere maintenance. Part of the H/ACA small nucleolar ribonucleoprotein (H/ACA snoRNP) complex, which catalyzes pseudouridylation of rRNA. This involves the isomerization of uridine such that the ribose is subsequently attached to C5, instead of the normal N1. Each rRNA can contain up to 100 pseudouridine ('psi') residues, which may serve to stabilize the conformation of rRNAs. May also be required for correct processing or intranuclear trafficking of TERC, the RNA component of the telomerase reverse transcriptase (TERT) holoenzyme. This is H/ACA ribonucleoprotein complex subunit 2 (NHP2) from Bos taurus (Bovine).